The following is a 192-amino-acid chain: MFIAILMGAYLLGSIPFAYILTKLMAKRDIREVGSKNVGATNVFRVNKGLAGLVLLLDIAKSAVLIYSLKEYDIVSTKEELCIVGLLSVLGHIYPIWLKFKGGKGVATGIGVIIPLNPLMLCVFFISWLFTFNNTRYASLSSIVSIIATMIVCYLTESGVVALLYTVQSILILFKHRENIVRLIKREEKKVI.

Transmembrane regions (helical) follow at residues 1 to 21 (MFIA…AYIL), 49 to 69 (GLAG…IYSL), 80 to 100 (ELCI…WLKF), 110 to 130 (IGVI…SWLF), and 143 to 163 (IVSI…VVAL).

This sequence belongs to the PlsY family. Probably interacts with PlsX.

Its subcellular location is the cell inner membrane. It carries out the reaction an acyl phosphate + sn-glycerol 3-phosphate = a 1-acyl-sn-glycero-3-phosphate + phosphate. Its pathway is lipid metabolism; phospholipid metabolism. Functionally, catalyzes the transfer of an acyl group from acyl-phosphate (acyl-PO(4)) to glycerol-3-phosphate (G3P) to form lysophosphatidic acid (LPA). This enzyme utilizes acyl-phosphate as fatty acyl donor, but not acyl-CoA or acyl-ACP. The sequence is that of Glycerol-3-phosphate acyltransferase from Anaplasma phagocytophilum (strain HZ).